The following is a 366-amino-acid chain: 3-dehydroquinate synthase (366 aa).

NAD(+) contacts are provided by residues 107–111, 131–132, Lys144, and Lys153; these read GVIGD and TS. Residues Glu186, His251, and His268 each coordinate Zn(2+).

It belongs to the sugar phosphate cyclases superfamily. Dehydroquinate synthase family. Co(2+) is required as a cofactor. The cofactor is Zn(2+). It depends on NAD(+) as a cofactor.

Its subcellular location is the cytoplasm. The enzyme catalyses 7-phospho-2-dehydro-3-deoxy-D-arabino-heptonate = 3-dehydroquinate + phosphate. Its pathway is metabolic intermediate biosynthesis; chorismate biosynthesis; chorismate from D-erythrose 4-phosphate and phosphoenolpyruvate: step 2/7. In terms of biological role, catalyzes the conversion of 3-deoxy-D-arabino-heptulosonate 7-phosphate (DAHP) to dehydroquinate (DHQ). In Rippkaea orientalis (strain PCC 8801 / RF-1) (Cyanothece sp. (strain PCC 8801)), this protein is 3-dehydroquinate synthase.